A 244-amino-acid chain; its full sequence is UPF0173 metal-dependent hydrolase Rcas_3617 (244 aa).

It belongs to the UPF0173 family.

This chain is UPF0173 metal-dependent hydrolase Rcas_3617, found in Roseiflexus castenholzii (strain DSM 13941 / HLO8).